A 150-amino-acid chain; its full sequence is Large ribosomal subunit protein uL15 (150 aa).

The segment at 1–57 is disordered; that stretch reads MSLTLQSLKPQKGARRRKMRKGRGIAAGQGASCGFGMRGQKSRSGRPTRPGFEGGQM. A compositionally biased stretch (basic residues) spans 12-23; sequence KGARRRKMRKGR. A compositionally biased stretch (gly residues) spans 25-37; the sequence is IAAGQGASCGFGM.

Belongs to the universal ribosomal protein uL15 family. As to quaternary structure, part of the 50S ribosomal subunit.

In terms of biological role, binds to the 23S rRNA. The polypeptide is Large ribosomal subunit protein uL15 (Synechococcus sp. (strain RCC307)).